Here is a 147-residue protein sequence, read N- to C-terminus: Large ribosomal subunit protein bL9 (147 aa).

Belongs to the bacterial ribosomal protein bL9 family.

Binds to the 23S rRNA. In Sulfurovum sp. (strain NBC37-1), this protein is Large ribosomal subunit protein bL9.